Reading from the N-terminus, the 620-residue chain is Cell fusion protein cfr1 (620 aa).

One can recognise a Fibronectin type-III domain in the interval 79–169 (LPSPPVLKLK…KHITIKTLRM (91 aa)). The region spanning 167–256 (LRMIDLTGIQ…RLVNVSGFYI (90 aa)) is the BRCT domain. Disordered stretches follow at residues 287 to 566 (QPKN…PEKA) and 588 to 620 (KQSS…VNID). Over residues 303–314 (APQQTTQQGTQN) the composition is skewed to polar residues. A compositionally biased stretch (low complexity) spans 315-330 (SANAEPSSSASVPAEA). Over residues 352-375 (SKPNEAPTSSENIKADQPENSTKQ) the composition is skewed to polar residues. A compositionally biased stretch (basic and acidic residues) spans 382–392 (MQIKDAEEHSN). Polar residues predominate over residues 393–406 (LESTPAAQQTSEVE). The span at 424–434 (NVNEENNTPET) shows a compositional bias: low complexity. Residues 445 to 468 (NTAAESLINQEETTSGEAVTKSTV) show a composition bias toward polar residues. Acidic residues predominate over residues 472 to 484 (ANEEEAEPNEIIE). The span at 506–515 (NNANSENANG) shows a compositional bias: polar residues. A compositionally biased stretch (basic and acidic residues) spans 517-537 (TDEKIIEAPLDTKENSDDDKP).

It belongs to the CHS5 family.

The protein localises to the golgi apparatus. Its function is as follows. Required for cell fusion, independently of fus1. Appears to have a role in transporting proteins that are involved in mating. May act as a scaffold to retain cell fusion proteins in the cisternae of the Golgi. Degraded at the onset of mating and this leads to release of cell fusion proteins. This chain is Cell fusion protein cfr1 (cfr1), found in Schizosaccharomyces pombe (strain 972 / ATCC 24843) (Fission yeast).